A 286-amino-acid polypeptide reads, in one-letter code: Probable glucose uptake protein GlcU (286 aa).

10 helical membrane passes run 4 to 22, 27 to 49, 53 to 72, 85 to 107, 111 to 133, 154 to 176, 181 to 198, 211 to 228, 233 to 255, and 267 to 284; these read IFLAILPAIFWGSIVLFNV, GPYSQTLGTTFGALIFSIVVYIF, VLTPTVIGVGVVSGLFWALG, VSRTMPISTGLQLVATTLFGVIV, WSTTISVVLGILALVCIIIGVIL, IVILLISTVGYLVYVVVIRLFNV, ALLPQAVGMVLGGILLTF, IIPGLIWAAGNMFLFISQ, VATSFSLSQMGIIISTLGGILIL, and IVVGIVFIIAAGIMLGIA.

The protein belongs to the GRP transporter (TC 2.A.7.5) family.

It is found in the cell membrane. Involved in the uptake of glucose. This is Probable glucose uptake protein GlcU (glcU) from Bacillus cereus (strain ATCC 14579 / DSM 31 / CCUG 7414 / JCM 2152 / NBRC 15305 / NCIMB 9373 / NCTC 2599 / NRRL B-3711).